The chain runs to 146 residues: Lysozyme C-2 (146 aa).

Residues 1–18 form the signal peptide; the sequence is MKTLLVLALLLLSVSVQA. One can recognise a C-type lysozyme domain in the interval 19 to 146; it reads KVYDRCEFAR…VSQYIRGCKL (128 aa). 4 disulfide bridges follow: Cys-24–Cys-144, Cys-48–Cys-132, Cys-81–Cys-97, and Cys-93–Cys-111. Catalysis depends on residues Glu-53 and Asp-69.

It belongs to the glycosyl hydrolase 22 family. In terms of assembly, monomer.

It is found in the secreted. The catalysed reaction is Hydrolysis of (1-&gt;4)-beta-linkages between N-acetylmuramic acid and N-acetyl-D-glucosamine residues in a peptidoglycan and between N-acetyl-D-glucosamine residues in chitodextrins.. Lysozymes have primarily a bacteriolytic function; those in tissues and body fluids are associated with the monocyte-macrophage system and enhance the activity of immunoagents. The polypeptide is Lysozyme C-2 (Sus scrofa (Pig)).